Consider the following 319-residue polypeptide: Inositol phosphoceramide mannosyltransferase 1 (319 aa).

A helical transmembrane segment spans residues 8–28 (LLLKGIPICGVILLILWGYSL). N-linked (GlcNAc...) asparagine glycosylation is found at N115 and N198. A run of 2 helical transmembrane segments spans residues 211-231 (PTVFLSAGPLFLSYQFCKYLL) and 279-299 (VLFFAFLAAFAILFLCLRVVF).

The protein belongs to the glycosyltransferase 32 family.

It localises to the golgi apparatus. The protein resides in the cis-Golgi network membrane. The protein localises to the trans-Golgi network membrane. With imt2 and imt3, is required for the synthesis of mannosyl phosphorylinositol ceramide (MIPC). Catalyzes the addition of mannosyl to phosphorylinositol ceramide (IPC). MIPC is essential for cell morphology, cell-surface distribution of ergosterol, localization for plasma-membrane transporters, and lipid-raft-mediated endocytosis of plasma membrane proteins to the vacuole. The polypeptide is Inositol phosphoceramide mannosyltransferase 1 (imt1) (Schizosaccharomyces pombe (strain 972 / ATCC 24843) (Fission yeast)).